Consider the following 206-residue polypeptide: Probable GTP-binding protein EngB (206 aa).

An EngB-type G domain is found at Arg8–Glu195. GTP is bound by residues Gly16–Ser23, Gly41–Gln45, Asp60–Gly63, Asn140–Asp143, and Ile175–Ala177. 2 residues coordinate Mg(2+): Ser23 and Thr43.

The protein belongs to the TRAFAC class TrmE-Era-EngA-EngB-Septin-like GTPase superfamily. EngB GTPase family. It depends on Mg(2+) as a cofactor.

Its function is as follows. Necessary for normal cell division and for the maintenance of normal septation. This chain is Probable GTP-binding protein EngB, found in Halorubrum lacusprofundi (strain ATCC 49239 / DSM 5036 / JCM 8891 / ACAM 34).